Here is a 169-residue protein sequence, read N- to C-terminus: Peptide deformylase (169 aa).

Positions 91 and 133 each coordinate Fe cation. E134 is a catalytic residue. Residue H137 participates in Fe cation binding.

Belongs to the polypeptide deformylase family. Fe(2+) serves as cofactor.

It carries out the reaction N-terminal N-formyl-L-methionyl-[peptide] + H2O = N-terminal L-methionyl-[peptide] + formate. Functionally, removes the formyl group from the N-terminal Met of newly synthesized proteins. Requires at least a dipeptide for an efficient rate of reaction. N-terminal L-methionine is a prerequisite for activity but the enzyme has broad specificity at other positions. The sequence is that of Peptide deformylase from Citrobacter koseri (strain ATCC BAA-895 / CDC 4225-83 / SGSC4696).